Reading from the N-terminus, the 126-residue chain is uncharacterized protein (126 aa).

This is an uncharacterized protein from Homo sapiens (Human).